Consider the following 157-residue polypeptide: MQPTMRIIVSMALLAYAVASAYHSNVKLRRDGKMVLYPFPRVGRASGNTWQLPLNDLYPEYEPAQVKRQLYAFPRVGRDPVMSRLGRSDLSRVESHEFQPMAVRRTESPGMWFGPRLGRAFKNDDDEITIQNESNDHSEPEQTELIHEDRRKRQTLN.

The N-terminal stretch at 1-21 (MQPTMRIIVSMALLAYAVASA) is a signal peptide. Positions 22-28 (YHSNVKL) are excised as a propeptide. At Val-42 the chain carries Valine amide. The propeptide occupies 45–66 (ASGNTWQLPLNDLYPEYEPAQV). Gln-69 carries the post-translational modification Pyrrolidone carboxylic acid; partial. Val-76 is subject to Valine amide. Leu-85 and Leu-117 each carry leucine amide. The propeptide occupies 120 to 157 (AFKNDDDEITIQNESNDHSEPEQTELIHEDRRKRQTLN). Residues 131-157 (QNESNDHSEPEQTELIHEDRRKRQTLN) form a disordered region. Residues 134–151 (SNDHSEPEQTELIHEDRR) show a composition bias toward basic and acidic residues.

Belongs to the pyrokinin family. CAPA-periviscerokinin 1: Expressed in corpora cardiaca (CC), corpora allata (CA), antennal lobe (AL) and gnathal ganglion (GNG) (at protein level). Expression detected in most animals in CC and CA and in some animals in AL and GNG (at protein level). CAPA-periviscerokinin 2: Expressed in corpora cardiaca (CC), corpora allata (CA), antennal lobe (AL) and gnathal ganglion (GNG) (at protein level). For non-pyroglutamate form, expression in AL detected in all animals, in CC, CA and GNG in most animals (at protein level). For pyroglutamate form, expression in CC and CA detected in most animals, in AL and GNG in some animals (at protein level). CAPA-periviscerokinin 3: Expressed in corpora cardiaca (CC), corpora allata (CA), antennal lobe (AL) and gnathal ganglion (GNG). Expression detected in most animals in CC and CA and in some animals in AL and GNG (at protein level). CAPA-precursor-related peptide 3: Expressed in corpora cardiaca (CC), corpora allata (CA), antennal lobe (AL) and gnathal ganglion (GNG) (at protein level). Expression in CC and CA detected in some animals, expression in Al and GNG detected in few animals (at protein level). CAPA-trypto-pyrokinin: Expressed in corpora cardiaca (CC), corpora allata (CA), antennal lobe (AL) and gnathal ganglion (GNG) (at protein level). Expression in CC, CA and GNG detected in most animals, in AL in some animals (at protein level).

It localises to the secreted. Functionally, myoactive. In Agrotis ipsilon (Black cutworm moth), this protein is CAPA peptides.